We begin with the raw amino-acid sequence, 215 residues long: Osteoclast-stimulating factor 1 (215 aa).

N-acetylserine is present on Ser2. One can recognise an SH3 domain in the interval 12 to 71 (GQVKVFRALYTFEPRTPDELYFEEGDIIYITDMSDTSWWKGTCKGRTGLIPSNYVAEQAE). ANK repeat units follow at residues 72–101 (SIDN…GVNG), 105–135 (AGST…ELNQ), and 139–168 (LGDT…RTDL). The tract at residues 192 to 215 (KQQGTDGARTLSNAEDYLDDEDSD) is disordered. Thr201 is modified (phosphothreonine). Phosphoserine occurs at positions 203 and 214.

Interacts with C-SRC and SMN1. Interacts with FASLG.

The protein localises to the cytoplasm. In terms of biological role, induces bone resorption, acting probably through a signaling cascade which results in the secretion of factor(s) enhancing osteoclast formation and activity. The polypeptide is Osteoclast-stimulating factor 1 (Ostf1) (Mus musculus (Mouse)).